Reading from the N-terminus, the 84-residue chain is Toxin Aah4 (84 aa).

The first 19 residues, 1–19 (MNYLIMFSLALLLVIGVES), serve as a signal peptide directing secretion. The 62-residue stretch at 21-82 (RDGYIVDSKN…PIKDPSDDCH (62 aa)) folds into the LCN-type CS-alpha/beta domain. Intrachain disulfides connect Cys-31/Cys-81, Cys-35/Cys-53, Cys-39/Cys-63, and Cys-43/Cys-65. Residue Arg-84 is a propeptide, removed by a carboxypeptidase.

Belongs to the long (4 C-C) scorpion toxin superfamily. Sodium channel inhibitor family. Alpha subfamily. Expressed by the venom gland.

It is found in the secreted. Functionally, alpha toxins bind voltage-independently at site-3 of sodium channels (Nav) and inhibit the inactivation of the activated channels, thereby blocking neuronal transmission. This toxin seems to specifically act on Nav1.6/SCN8A sodium channel. In vitro, it inhibits the proliferation of the prostate cancer cell line DU145 (IC(50)=15 uM). It shows low effect on the adhesion of DU145 cells to fibronectin (at 15 uM) and is inactive on DU145 cells migration. The protein is Toxin Aah4 of Androctonus australis (Sahara scorpion).